Reading from the N-terminus, the 454-residue chain is tRNA modification GTPase MnmE (454 aa).

The (6S)-5-formyl-5,6,7,8-tetrahydrofolate site is built by R23, E80, and K120. A TrmE-type G domain is found at 216–377 (GMKVVIAGRP…LRNHLKQSMG (162 aa)). N226 is a K(+) binding site. GTP is bound by residues 226-231 (NAGKSS), 245-251 (TDIAGTT), 270-273 (DTAG), 335-338 (NKAD), and 358-360 (SAR). Residue S230 participates in Mg(2+) binding. K(+) is bound by residues T245, I247, and T250. T251 is a binding site for Mg(2+). Residue K454 participates in (6S)-5-formyl-5,6,7,8-tetrahydrofolate binding.

This sequence belongs to the TRAFAC class TrmE-Era-EngA-EngB-Septin-like GTPase superfamily. TrmE GTPase family. In terms of assembly, homodimer. Heterotetramer of two MnmE and two MnmG subunits. K(+) serves as cofactor.

The protein resides in the cytoplasm. In terms of biological role, exhibits a very high intrinsic GTPase hydrolysis rate. Involved in the addition of a carboxymethylaminomethyl (cmnm) group at the wobble position (U34) of certain tRNAs, forming tRNA-cmnm(5)s(2)U34. In Shigella boydii serotype 18 (strain CDC 3083-94 / BS512), this protein is tRNA modification GTPase MnmE.